The sequence spans 69 residues: Toxin Tma3 (69 aa).

In terms of domain architecture, LCN-type CS-alpha/beta spans 2-66 (KDDYPVDTAK…SPTKKSGRCN (65 aa)). 4 cysteine pairs are disulfide-bonded: Cys-14/Cys-65, Cys-18/Cys-41, Cys-27/Cys-48, and Cys-31/Cys-50.

The protein belongs to the long (4 C-C) scorpion toxin superfamily. Sodium channel inhibitor family. In terms of tissue distribution, expressed by the venom gland.

It localises to the secreted. Its function is as follows. Inhibits voltage-gated sodium channels (Nav). This toxin shows insect lethality against crickets. The polypeptide is Toxin Tma3 (Tityus macrochirus (Scorpion)).